Reading from the N-terminus, the 100-residue chain is Putative antiporter subunit mnhF2 (100 aa).

Transmembrane regions (helical) follow at residues 5–25, 38–60, and 70–92; these read ITHIMIISSLIIFGIALIICL, VVTFDTTSAVVMSIVGVLSVLMG, and LIAIISFVSSVSISRFIGGGHVF.

This sequence belongs to the CPA3 antiporters (TC 2.A.63) subunit F family. May form a heterooligomeric complex that consists of seven subunits: mnhA2, mnhB2, mnhC2, mnhD2, mnhE2, mnhF2 and mnhG2.

The protein resides in the cell membrane. This chain is Putative antiporter subunit mnhF2 (mnhF2), found in Staphylococcus aureus (strain USA300).